Consider the following 1420-residue polypeptide: Putative mediator of RNA polymerase II transcription subunit 14 (1420 aa).

A coiled-coil region spans residues 1–43 (MDQNQQQQQQQQQQQQQQQQQQQQQQQQQQQQQQQQQQQQQQQ). Low complexity-rich tracts occupy residues 1–43 (MDQN…QQQQ) and 449–474 (TTSSSSSSSSNNNNTASPIINRNNNN). Disordered stretches follow at residues 1–59 (MDQN…TTPI), 449–490 (TTSS…NPLS), 750–799 (QQDI…GYKN), and 1389–1420 (QQQQQQQQQQQQQQQQQQIENNNFASASSSIR). The segment covering 475–490 (GKPNLLSTKQSNNPLS) has biased composition (polar residues). Low complexity-rich tracts occupy residues 755–795 (NNNN…NGNN) and 1389–1406 (QQQQQQQQQQQQQQQQQQ). Residues 1382-1412 (LLIQQQQQQQQQQQQQQQQQQQQQQIENNNF) adopt a coiled-coil conformation. The span at 1407–1420 (IENNNFASASSSIR) shows a compositional bias: polar residues.

This sequence belongs to the Mediator complex subunit 14 family. Component of the Mediator complex.

Its subcellular location is the nucleus. Component of the Mediator complex, a coactivator involved in the regulated transcription of nearly all RNA polymerase II-dependent genes. Mediator functions as a bridge to convey information from gene-specific regulatory proteins to the basal RNA polymerase II transcription machinery. Mediator is recruited to promoters by direct interactions with regulatory proteins and serves as a scaffold for the assembly of a functional preinitiation complex with RNA polymerase II and the general transcription factors. The polypeptide is Putative mediator of RNA polymerase II transcription subunit 14 (med14) (Dictyostelium discoideum (Social amoeba)).